Reading from the N-terminus, the 58-residue chain is uncharacterized protein (58 aa).

Residues 18–38 (WLMIVLLFCSTGMVFLATILE) form a helical membrane-spanning segment.

It localises to the membrane. This is an uncharacterized protein from Saccharomyces cerevisiae (strain ATCC 204508 / S288c) (Baker's yeast).